The sequence spans 150 residues: Ubiquitin-conjugating enzyme E2 3 (150 aa).

The UBC core domain occupies 4–150; the sequence is PAKKRLMWDF…VIEIVEQSYV (147 aa). The active-site Glycyl thioester intermediate is C88.

Belongs to the ubiquitin-conjugating enzyme family. In terms of tissue distribution, expressed in all tissues examined. Lower levels found in leaves.

The enzyme catalyses S-ubiquitinyl-[E1 ubiquitin-activating enzyme]-L-cysteine + [E2 ubiquitin-conjugating enzyme]-L-cysteine = [E1 ubiquitin-activating enzyme]-L-cysteine + S-ubiquitinyl-[E2 ubiquitin-conjugating enzyme]-L-cysteine.. The protein operates within protein modification; protein ubiquitination. Its function is as follows. Accepts the ubiquitin from the E1 complex and catalyzes its covalent attachment to other proteins. The polypeptide is Ubiquitin-conjugating enzyme E2 3 (UBC3) (Arabidopsis thaliana (Mouse-ear cress)).